Reading from the N-terminus, the 363-residue chain is 3-dehydroquinate synthase (363 aa).

Residues 134–135 (TT), Lys-147, and Lys-156 each bind NAD(+). 3 residues coordinate Zn(2+): Glu-189, His-254, and His-271.

This sequence belongs to the sugar phosphate cyclases superfamily. Dehydroquinate synthase family. Requires Co(2+) as cofactor. Zn(2+) is required as a cofactor. It depends on NAD(+) as a cofactor.

Its subcellular location is the cytoplasm. The catalysed reaction is 7-phospho-2-dehydro-3-deoxy-D-arabino-heptonate = 3-dehydroquinate + phosphate. Its pathway is metabolic intermediate biosynthesis; chorismate biosynthesis; chorismate from D-erythrose 4-phosphate and phosphoenolpyruvate: step 2/7. In terms of biological role, catalyzes the conversion of 3-deoxy-D-arabino-heptulosonate 7-phosphate (DAHP) to dehydroquinate (DHQ). This is 3-dehydroquinate synthase from Prochlorococcus marinus (strain MIT 9215).